The chain runs to 460 residues: Cysteine--tRNA ligase (460 aa).

Cysteine 28 contributes to the Zn(2+) binding site. The short motif at 30 to 40 (NTVYDFCHIGH) is the 'HIGH' region element. Zn(2+)-binding residues include cysteine 209, histidine 234, and glutamate 238. A 'KMSKS' region motif is present at residues 266–270 (KMSKS). Residue lysine 269 participates in ATP binding.

Belongs to the class-I aminoacyl-tRNA synthetase family. In terms of assembly, monomer. Zn(2+) is required as a cofactor.

It is found in the cytoplasm. The catalysed reaction is tRNA(Cys) + L-cysteine + ATP = L-cysteinyl-tRNA(Cys) + AMP + diphosphate. In Marinomonas sp. (strain MWYL1), this protein is Cysteine--tRNA ligase.